The primary structure comprises 264 residues: 5'-nucleotidase SurE (264 aa).

4 residues coordinate a divalent metal cation: Asp-10, Asp-11, Ser-43, and Asn-99.

Belongs to the SurE nucleotidase family. A divalent metal cation serves as cofactor.

The protein resides in the cytoplasm. The catalysed reaction is a ribonucleoside 5'-phosphate + H2O = a ribonucleoside + phosphate. Nucleotidase that shows phosphatase activity on nucleoside 5'-monophosphates. The polypeptide is 5'-nucleotidase SurE (Methanococcus maripaludis (strain C5 / ATCC BAA-1333)).